A 302-amino-acid chain; its full sequence is MRKEYLVSHIEENAHQADIYSLNVVAGNLWSASGDSKIKKWSIGDAEHSLVEEIDTPHKLGVHHLATSLDENVVVSCGFGQDVYVWNPETNEFRDLGNNAQHPSECWSSCISPDGQTIAFTSVDGRIAVWDNPSDCKISELDTKGKFGLCIDYSPNGRFIVSGHQTGQLFLISTETGRLFHVLSGHTSPVRSVAFSPGSTLLAAAGDSKMITIYDVLSGDQVGQLRGHAAWIFAVAFNPVGDLLLSADVEGKIKIWDIDTMECISTQSETDGAIWAVAWYKNGFIVAGADKSIRWYRAAATE.

WD repeat units lie at residues 14 to 51 (AHQADIYSLNVVAGNLWSASGDSKIKKWSIGDAEHSLV), 57 to 96 (PHKLGVHHLATSLDENVVVSCGFGQDVYVWNPETNEFRDL), 101 to 140 (QHPSECWSSCISPDGQTIAFTSVDGRIAVWDNPSDCKISE), 142 to 184 (DTKG…HVLS), 185 to 226 (GHTS…GQLR), 227 to 266 (GHAAWIFAVAFNPVGDLLLSADVEGKIKIWDIDTMECIST), and 269 to 302 (ETDGAIWAVAWYKNGFIVAGADKSIRWYRAAATE).

In terms of assembly, component of the DSB catalytic core (DSBC) complex, composed of at least rec12, rec6 and rec14. The complex interacts with mde2.

Functionally, required for formation of the rec12-mediated double-strand breaks (DSBs) that initiate meiotic recombination. The sequence is that of Meiotic recombination protein rec14 from Schizosaccharomyces pombe (strain 972 / ATCC 24843) (Fission yeast).